The following is a 123-amino-acid chain: Neuropeptide-like peptides nlp-40 (123 aa).

The signal sequence occupies residues 1–17 (MKLVILLSFVATVAVFA). Propeptides lie at residues 30–31 (RA), 66–67 (KR), and 75–76 (KR).

As to expression, expressed in intestinal cells.

Its subcellular location is the secreted. It is found in the cytoplasmic vesicle. Functionally, neuropeptide ligand for the G-protein coupled receptor aex-2. Activates and regulates the rhythmic calcium influx in DVB GABergic neurons during the defecation motor program, which is a coordinated series of three muscle contractions that occurs every 45 seconds. This Caenorhabditis elegans protein is Neuropeptide-like peptides nlp-40.